We begin with the raw amino-acid sequence, 130 residues long: Glycine cleavage system H protein (130 aa).

One can recognise a Lipoyl-binding domain in the interval 24-106; sequence IYSVGITEHA…YTDGWLFRIK (83 aa). At Lys-65 the chain carries N6-lipoyllysine.

It belongs to the GcvH family. As to quaternary structure, the glycine cleavage system is composed of four proteins: P, T, L and H. It depends on (R)-lipoate as a cofactor.

Its function is as follows. The glycine cleavage system catalyzes the degradation of glycine. The H protein shuttles the methylamine group of glycine from the P protein to the T protein. In Pectobacterium atrosepticum (strain SCRI 1043 / ATCC BAA-672) (Erwinia carotovora subsp. atroseptica), this protein is Glycine cleavage system H protein.